A 749-amino-acid chain; its full sequence is Adenosylcobalamin-dependent ribonucleoside-triphosphate reductase (749 aa).

Cysteines 124 and 427 form a disulfide. The effector region-1 stretch occupies residues 152-163 (SMPFSFMFDQLM). An effector region-2 region spans residues 173–321 (TPNNVHQMPV…MGNMIGKTVV (149 aa)). Catalysis depends on residues Cys416 and Glu418. Residues 573 to 634 (FHYARYLIQR…EPAFASAGEV (62 aa)) are adenosylcobalamin-binding-1. Residues 693–734 (FKQAPKEPIDAATYDAKCQEITADVAEKFAAMTGNHDQKDIE) form an adenosylcobalamin-binding-2 region.

Belongs to the class II ribonucleoside-triphosphate reductase family. As to quaternary structure, monomer. Adenosylcob(III)alamin serves as cofactor.

It catalyses the reaction a 2'-deoxyribonucleoside 5'-triphosphate + [thioredoxin]-disulfide + H2O = a ribonucleoside 5'-triphosphate + [thioredoxin]-dithiol. Its activity is regulated as follows. Allosterically regulated by ATP and dNTP. The protein is Adenosylcobalamin-dependent ribonucleoside-triphosphate reductase (rtpR) of Levilactobacillus brevis (strain ATCC 367 / BCRC 12310 / CIP 105137 / JCM 1170 / LMG 11437 / NCIMB 947 / NCTC 947) (Lactobacillus brevis).